We begin with the raw amino-acid sequence, 270 residues long: Regulatory protein RecX (270 aa).

This sequence belongs to the RecX family.

Its subcellular location is the cytoplasm. In terms of biological role, modulates RecA activity. This chain is Regulatory protein RecX, found in Bacillus cereus (strain ZK / E33L).